A 211-amino-acid polypeptide reads, in one-letter code: Urease accessory protein UreF (211 aa).

Residues 71-93 form a disordered region; that stretch reads DDADRETDARTPAPAARHASRSQ.

Belongs to the UreF family. In terms of assembly, ureD, UreF and UreG form a complex that acts as a GTP-hydrolysis-dependent molecular chaperone, activating the urease apoprotein by helping to assemble the nickel containing metallocenter of UreC. The UreE protein probably delivers the nickel.

The protein resides in the cytoplasm. Required for maturation of urease via the functional incorporation of the urease nickel metallocenter. The sequence is that of Urease accessory protein UreF from Mycobacterium bovis (strain ATCC BAA-935 / AF2122/97).